The sequence spans 185 residues: Ribose 1,5-bisphosphate phosphokinase PhnN (185 aa).

ATP is bound at residue Gly10 to Asp17.

This sequence belongs to the ribose 1,5-bisphosphokinase family.

The enzyme catalyses alpha-D-ribose 1,5-bisphosphate + ATP = 5-phospho-alpha-D-ribose 1-diphosphate + ADP. The protein operates within metabolic intermediate biosynthesis; 5-phospho-alpha-D-ribose 1-diphosphate biosynthesis; 5-phospho-alpha-D-ribose 1-diphosphate from D-ribose 5-phosphate (route II): step 3/3. Catalyzes the phosphorylation of ribose 1,5-bisphosphate to 5-phospho-D-ribosyl alpha-1-diphosphate (PRPP). This Escherichia coli O157:H7 protein is Ribose 1,5-bisphosphate phosphokinase PhnN.